The following is a 740-amino-acid chain: Ion-translocating oxidoreductase complex subunit C (740 aa).

4Fe-4S ferredoxin-type domains follow at residues glycine 369–tyrosine 397 and lysine 407–phenylalanine 436. Residues cysteine 377, cysteine 380, cysteine 383, cysteine 387, cysteine 416, cysteine 419, cysteine 422, and cysteine 426 each coordinate [4Fe-4S] cluster. The segment at lysine 602 to lysine 716 is disordered.

This sequence belongs to the 4Fe4S bacterial-type ferredoxin family. RnfC subfamily. In terms of assembly, the complex is composed of six subunits: RsxA, RsxB, RsxC, RsxD, RsxE and RsxG. The cofactor is [4Fe-4S] cluster.

The protein resides in the cell inner membrane. Part of a membrane-bound complex that couples electron transfer with translocation of ions across the membrane. Required to maintain the reduced state of SoxR. This is Ion-translocating oxidoreductase complex subunit C from Escherichia coli O139:H28 (strain E24377A / ETEC).